We begin with the raw amino-acid sequence, 322 residues long: NADH-quinone oxidoreductase subunit H (322 aa).

Helical transmembrane passes span 12 to 32 (IGKA…MSFI), 79 to 99 (IFIL…AVVP), 111 to 131 (VGLL…LFAG), 151 to 171 (LSYE…TGSF), 183 to 203 (LWNV…GVAV), 234 to 254 (FFVG…TLFF), 262 to 282 (LPPF…FILL), and 301 to 321 (VCLP…LMNV).

This sequence belongs to the complex I subunit 1 family. As to quaternary structure, NDH-1 is composed of 13 different subunits. Subunits NuoA, H, J, K, L, M, N constitute the membrane sector of the complex.

The protein localises to the cell inner membrane. The enzyme catalyses a quinone + NADH + 5 H(+)(in) = a quinol + NAD(+) + 4 H(+)(out). Its function is as follows. NDH-1 shuttles electrons from NADH, via FMN and iron-sulfur (Fe-S) centers, to quinones in the respiratory chain. The immediate electron acceptor for the enzyme in this species is believed to be ubiquinone. Couples the redox reaction to proton translocation (for every two electrons transferred, four hydrogen ions are translocated across the cytoplasmic membrane), and thus conserves the redox energy in a proton gradient. This subunit may bind ubiquinone. The sequence is that of NADH-quinone oxidoreductase subunit H from Shewanella oneidensis (strain ATCC 700550 / JCM 31522 / CIP 106686 / LMG 19005 / NCIMB 14063 / MR-1).